An 875-amino-acid polypeptide reads, in one-letter code: Cell surface glycoprotein (875 aa).

Positions 1–23 (MTNTKQKINAVFLSALMVMSVFA) are cleaved as a signal peptide. Over residues 137 to 157 (EVQNGGSGDVTGSTLQTSSSG) the composition is skewed to polar residues. Disordered stretches follow at residues 137–158 (EVQNGGSGDVTGSTLQTSSSGP) and 197–217 (LPTADRNNDNGASGSNGDFDV). Residues 205–216 (DNGASGSNGDFD) are compositionally biased toward low complexity. Asn-253 is a glycosylation site (N-linked (GlcNAc...) asparagine). The interval 380 to 414 (YPASDSSNDGYASGGSHASSVTVRDTDGDGTDDSE) is disordered. A compositionally biased stretch (polar residues) spans 383 to 402 (SDSSNDGYASGGSHASSVTV). Asn-455, Asn-563, Asn-715, and Asn-774 each carry an N-linked (GlcNAc...) asparagine glycan. The segment at 794 to 852 (EAGSLEEEQPDTETPEPDTETPEPDTETPEPDTETPEPDTETPEPDTETEEATTEASGP) is disordered. The segment covering 797 to 846 (SLEEEQPDTETPEPDTETPEPDTETPEPDTETPEPDTETPEPDTETEEAT) has biased composition (acidic residues). A helical transmembrane segment spans residues 851–875 (GPGFTAAIALIALVAAALLAVRRDN). The PGF sorting signal motif lies at 852–854 (PGF).

The protein belongs to the halobacterial S-layer protein family. Post-translationally, asn-455 is glycosylated by a pentasaccharide comprising a hexose, 2 hexuronic acids, a methyl ester of a hexuronic acid and a final hexose. The complete pentasaccharide is first assembled on dolichol phosphate and then transferred the glycan to the target Asn. Cleaved by the archaeosortase ArtA at the C-terminus, with removal of a short hydrophobic segment. In terms of processing, lipidation.

It is found in the secreted. The protein localises to the cell wall. The protein resides in the S-layer. Its subcellular location is the cell membrane. Its function is as follows. S-layer protein. The S-layer is a paracrystalline mono-layered assembly of proteins which coat the surface of the cell. The protein is Cell surface glycoprotein (csg1) of Haloarcula marismortui (strain ATCC 43049 / DSM 3752 / JCM 8966 / VKM B-1809) (Halobacterium marismortui).